Here is a 610-residue protein sequence, read N- to C-terminus: Protein mono-ADP-ribosyltransferase PARP6 (610 aa).

The PARP catalytic domain maps to 374–600; the sequence is EMTQGSYLEI…QDPKIQKEIM (227 aa). D580 is subject to ADP-ribosyl aspartic acid.

Belongs to the ARTD/PARP family. In terms of processing, auto-mono-ADP-ribosylated.

The catalysed reaction is L-aspartyl-[protein] + NAD(+) = 4-O-(ADP-D-ribosyl)-L-aspartyl-[protein] + nicotinamide. The enzyme catalyses L-cysteinyl-[protein] + NAD(+) = S-(ADP-D-ribosyl)-L-cysteinyl-[protein] + nicotinamide + H(+). Functionally, mono-ADP-ribosyltransferase that mediates mono-ADP-ribosylation of target proteins. The protein is Protein mono-ADP-ribosyltransferase PARP6 of Pongo abelii (Sumatran orangutan).